The primary structure comprises 405 residues: MGSINIVTPYMKIGQYLSFRNRDHFSWWHQKGPVLSQMLQACHYGVHEQYQYLTLFYAHLIPALGAYTEPSVGQKGNTLLSGAGRLELSRTFTVDDSSLRIAFEPTSFLASEKGTDPLNRVPLSRLLSVLGQLSGVSLGTDRYRTLADQLTTSDDDEEKLLNEPTLAEQLQSLPSRTQNILALELVNGFVKPELYFHPQMKALASGALVEDLLFDALRSVDSAGRLGKAIDLAKEFVQAAPTTTRPQFISYQIERSHSGAAKLFLTESAINWDQISGLWRYAQPETIQTEQNRALRVLWESLNVVEGNRGPNQFPIMMVLGLFAEEPFVRPQVAFPVVGMTEGAIARSIGRFFDNMGWKESSQSYVDGLRSYFPNEDLDQPLGKQAWVALSLFDSENPALTVFYY.

The dimethylallyl diphosphate site is built by Tyr-195, Lys-262, and Gln-332.

Belongs to the tryptophan dimethylallyltransferase family.

It functions in the pathway alkaloid biosynthesis. Functionally, prenyltransferase; part of the gene cluster that mediates the biosynthesis of paraherquamide, a fungal indole alkaloid that belongs to a family of natural products containing a characteristic bicyclo[2.2.2]diazaoctane core. The first steps in the biosynthesis of paraherquamide is the production of the beta-methyl-proline precursor from L-isoleucine. They require oxidation of a terminally hydroxylated L-isoleucine to the corresponding aldehyde by enzymes which have still to be identified. Spontaneous cyclization and dehydration would yield the 4-methyl pyrolline-5-carboxylic acid, which is then reduced by the pyrroline-5-carboxylate reductase phqD leading to the beta-methyl-proline precursor. The next step of paraherquamide biosynthesis involves coupling of beta-methyl-proline and L-tryptophan by the bimodular NRPS phqB, to produce a monooxopiperazine intermediate. The reductase (R) domain of phqB utilizes NADPH for hydride transfer to reduce the thioester bond of the T domain-tethered linear dipeptide to a hemithioaminal intermediate, which spontaneously cleaves the C-S bond to release the aldehyde product. This compound undergoes spontaneous cyclization and dehydration to give a dienamine which is reverse prenylated at C-2 by the reverse prenyltransferase phqJ. The other prenyltransferase present in the cluster, phqI may be a redundant gene in the pathway. During biosynthetic assembly, the key step to produce the polycyclic core is catalyzed by the bifunctional reductase and intramolecular [4+2] Diels-Alderase, phqE, resulting in formation of the [2.2.2] diazaoctane intermediate preparaherquamide. Following formation of preparaherquamide, an indole 2,3-epoxidation-initiated pinacol-like rearrangement is catalyzed by the phqK FAD-dependent monooxygenase. The prenyltransferase phqA, the cytochrome P450 monooxygenase phqL, and the FAD-linked oxidoreductase phqH (or the cytochrome P450 monooxygenase phqM), are proposed to be involved in the formation of the pyran ring. The FAD-dependent monooxygenase phqK is likely responsible for generation of the spiro-oxindole, and the N-methylation is likely mediated by the phqN methyltransferase leading to the isolable natural product paraherquamide F. However, the order of these biosynthetic steps has still to be determined. In late-stage paraherquamide biosynthesis, the third P450 monooxygenase, phqO, is probably responsible for the C-14 hydroxylation, transforming paraherquamide F to paraherquamide G, and paraherquamide E to the final product paraherquamide A. The expansion from the 6-membered ring pyran (in paraherquamides F and G) to the 7-membered dioxepin ring (in paraherquamides A and E) represents a poorly understood but intriguing process that probably involves the 2-oxoglutarate-dependent dioxygenase phqC. Finally, the remaining members of the paraherquamide cluster, including phqI as well as phqM (or phqH), do not have a clearly prescribed role and appear to be redundant. The chain is Prenyltransferase phqA from Penicillium fellutanum.